Reading from the N-terminus, the 489-residue chain is Hyaluronoglucuronidase (489 aa).

The Proton donor role is filled by E176. E290 functions as the Nucleophile in the catalytic mechanism.

Belongs to the glycosyl hydrolase 79 family.

The enzyme catalyses Random hydrolysis of (1-&gt;3)-linkages between beta-D-glucuronate and N-acetyl-D-glucosamine residues in hyaluronate.. With respect to regulation, hyaluronidase activity is inhibited by Mn(2+), Cu(2+) and Fe(3+). Functionally, hyaluronidase that mediates hydrolysis of (1-&gt;3)-linkages between beta-D-glucuronate and N-acetyl-D-glucosamine residues in hyaluronate. Very specific to hyaluronate: not able to hydrolyze chitin, heparin or chondroitin sulfate. In Hirudo nipponia (Korean blood-sucking leech), this protein is Hyaluronoglucuronidase.